A 258-amino-acid chain; its full sequence is Ribosomal RNA small subunit methyltransferase J (258 aa).

Residues 104 to 105 (RD), 120 to 121 (ER), and Asp-175 each bind S-adenosyl-L-methionine.

It belongs to the methyltransferase superfamily. RsmJ family.

The protein resides in the cytoplasm. The catalysed reaction is guanosine(1516) in 16S rRNA + S-adenosyl-L-methionine = N(2)-methylguanosine(1516) in 16S rRNA + S-adenosyl-L-homocysteine + H(+). Functionally, specifically methylates the guanosine in position 1516 of 16S rRNA. The chain is Ribosomal RNA small subunit methyltransferase J from Chromobacterium violaceum (strain ATCC 12472 / DSM 30191 / JCM 1249 / CCUG 213 / NBRC 12614 / NCIMB 9131 / NCTC 9757 / MK).